The following is a 147-amino-acid chain: MVHLTGDEKAAVTALWGKVNVDEVGGEALGRLLVVYPWTQRFFESFGDLSTPDAVMHNPKVKAHGKKVLGAFSDGLAHLDNLKGTFAQLSELHCDKLHVDPENFRLLGNVLVCVLAQHFGKEFTPQVQAAYQKVVAGVANALAHKYH.

Residue Val2 is modified to N-acetylvaline. Residues 3–147 form the Globin domain; sequence HLTGDEKAAV…VANALAHKYH (145 aa). At Thr13 the chain carries Phosphothreonine. Ser45 is subject to Phosphoserine. Lys60 carries the N6-acetyllysine modification. Residue His64 participates in heme b binding. Lys83 carries the N6-acetyllysine modification. His93 is a binding site for heme b. Position 94 is an S-nitrosocysteine (Cys94). An N6-acetyllysine modification is found at Lys145.

This sequence belongs to the globin family. As to quaternary structure, heterotetramer of two alpha chains and two beta chains. Red blood cells.

In terms of biological role, involved in oxygen transport from the lung to the various peripheral tissues. The sequence is that of Hemoglobin subunit beta (HBB) from Alouatta belzebul (Red-handed howler monkey).